The chain runs to 428 residues: MNYLFKNGRYMNEEGKIVATDLLVQDGKIAKVAENITADNAEVIEVNGNLIAPGLVDVHVHLREPGGEHKETIETGTLAAAKGGFTTICSMPNTRPVPDCREHMEDLQKRIKEKAHVNVLPYGAITVRQAGSEMTDFETLKELGAFAFTDDGVGVQDASMMLAAMKRAAKLNMAVVAHCEENTLINKGCVHEGKFSEKHGLNGIPSVCESVHIARDILLAEAADCHYHVCHVSTKGSVRVIRDAKRAGIKVTAEVTPHHLVLCEDDIPSVDPNFKMNPPLRGKEDHAALIEGLLDGTIDMIATDHAPHTAEEKAQGIERAPFGITGFETAFPLLYTNLVKKGIITLEQLIQFLTEKPADTFGLEAGRLKEGRTADITIIDLEQEEEIDPTTFLSKGKNTPFAGWKCQGWPVMTIVGGKIAWQKESALV.

Zn(2+)-binding residues include His-59 and His-61. Residues 61–63 (HLR) and Asn-93 each bind substrate. Zn(2+) contacts are provided by Asp-151, His-178, and His-231. Asn-277 contributes to the substrate binding site. Residue Asp-304 participates in Zn(2+) binding. The active site involves Asp-304. Substrate is bound by residues His-308 and 322 to 323 (FG).

Belongs to the metallo-dependent hydrolases superfamily. DHOase family. Class I DHOase subfamily. Requires Zn(2+) as cofactor.

The catalysed reaction is (S)-dihydroorotate + H2O = N-carbamoyl-L-aspartate + H(+). Its pathway is pyrimidine metabolism; UMP biosynthesis via de novo pathway; (S)-dihydroorotate from bicarbonate: step 3/3. In terms of biological role, catalyzes the reversible cyclization of carbamoyl aspartate to dihydroorotate. This chain is Dihydroorotase, found in Bacillus cereus (strain G9842).